Reading from the N-terminus, the 138-residue chain is UPF0201 protein PH1010 (138 aa).

This sequence belongs to the UPF0201 family.

In Pyrococcus horikoshii (strain ATCC 700860 / DSM 12428 / JCM 9974 / NBRC 100139 / OT-3), this protein is UPF0201 protein PH1010.